The chain runs to 399 residues: Phosphoglycerate kinase (399 aa).

Residues 21-23 (DFN), arginine 36, 59-62 (HLGR), arginine 120, and arginine 158 contribute to the substrate site. Residues lysine 209, glycine 297, glutamate 328, and 355 to 358 (GGDS) contribute to the ATP site.

The protein belongs to the phosphoglycerate kinase family. As to quaternary structure, monomer.

The protein localises to the cytoplasm. It carries out the reaction (2R)-3-phosphoglycerate + ATP = (2R)-3-phospho-glyceroyl phosphate + ADP. It participates in carbohydrate degradation; glycolysis; pyruvate from D-glyceraldehyde 3-phosphate: step 2/5. In Streptococcus thermophilus (strain CNRZ 1066), this protein is Phosphoglycerate kinase.